The primary structure comprises 477 residues: E3 ubiquitin-protein ligase TRIM17 (477 aa).

Residues 16 to 66 (CSICLDYFTDPVMTACGHNFCRECIQMSWEKGKGKKGKKKQKGSFPCPECR) form an RING-type zinc finger. The B box-type zinc finger occupies 94–135 (HKRDLCQIHQEPLKLFCQDDQTPICVVCREAQEHRMHRVLPL). Zn(2+) contacts are provided by Cys99, His102, Cys121, and His127. The stretch at 135–225 (LDEAAREYKL…GKLQDSKASL (91 aa)) forms a coiled coil. Residues 276–475 (AIKTVCRVPG…MVISTVTMWV (200 aa)) enclose the B30.2/SPRY domain.

This sequence belongs to the TRIM/RBCC family. In terms of assembly, interacts (via coiled coil) with TRIM44 (via coiled coil). Interacts with TRIM28; this interaction prevents TRIM28 activity on BCL2A1. Interacts with TRIM41; this interaction prevents TRIM41 activity on ZSCAN2. Interacts with BECN1. Interacts with NFATC3 and NFATC4; these interactions prevent NFATC3 and NFATC4 nuclear localization. In terms of processing, auto-ubiquitinated. As to expression, expressed almost exclusively in the testis.

The protein localises to the cytoplasm. The protein resides in the lysosome. It carries out the reaction S-ubiquitinyl-[E2 ubiquitin-conjugating enzyme]-L-cysteine + [acceptor protein]-L-lysine = [E2 ubiquitin-conjugating enzyme]-L-cysteine + N(6)-ubiquitinyl-[acceptor protein]-L-lysine.. Its pathway is protein modification; protein ubiquitination. In terms of biological role, E3 ubiquitin ligase that plays important roles in the regulation of neuronal apoptosis, selective autophagy or cell proliferation. Stimulates the degradation of kinetochore ZW10 interacting protein ZWINT in a proteasome-dependent manner, leading to negative regulation of cell proliferation. Inhibits autophagic degradation of diverse known targets while contributing to autophagy of midbodies. Autophagy-inhibitory activity involves MCL1, which TRIM17 assembles into complexes with the key autophagy regulator BECN1. Controls neuronal apoptosis by mediating ubiquitination and degradation of MCL1 to initiate neuronal death. In addition, regulates NFAT transcription factors NFATC3 and NFATC4 activities by preventing their nuclear localization, thus inhibiting their transcriptional activities. Decreases TRIM41-mediated degradation of ZSCAN2 thereby stimulating alpha-synuclein/SNCA transcription in neuronal cells. Prevents the E3 ubiquitin-ligase activity of TRIM28 and its interaction with anti-apoptotic BCL2A1, blocking TRIM28 from ubiquitinating BCL2A1. The chain is E3 ubiquitin-protein ligase TRIM17 (Trim17) from Rattus norvegicus (Rat).